The sequence spans 713 residues: Polyribonucleotide nucleotidyltransferase (713 aa).

The Mg(2+) site is built by Asp498 and Asp504. Residues 565–631 (PRILSLKVPV…RIEDLTREAK (67 aa)) enclose the KH domain. The S1 motif domain occupies 633 to 701 (GEIYEGTVTR…ERGKIDLIRP (69 aa)).

Belongs to the polyribonucleotide nucleotidyltransferase family. Requires Mg(2+) as cofactor.

The protein localises to the cytoplasm. The catalysed reaction is RNA(n+1) + phosphate = RNA(n) + a ribonucleoside 5'-diphosphate. Involved in mRNA degradation. Catalyzes the phosphorolysis of single-stranded polyribonucleotides processively in the 3'- to 5'-direction. The chain is Polyribonucleotide nucleotidyltransferase from Thermus thermophilus (strain ATCC 27634 / DSM 579 / HB8).